The chain runs to 92 residues: MVENVIWPAALDANRSRSDGRRVSLDLAVENPTVDEIAKAVQQVGYDAVIERDKTYPREYEGRGRVVVKDADDATKSDLLGAVAAYMQALRE.

It belongs to the SRP19 family. In terms of assembly, part of the signal recognition particle protein translocation system, which is composed of SRP and FtsY. Archaeal SRP consists of a 7S RNA molecule of 300 nucleotides and two protein subunits: SRP54 and SRP19.

It is found in the cytoplasm. Functionally, involved in targeting and insertion of nascent membrane proteins into the cytoplasmic membrane. Binds directly to 7S RNA and mediates binding of the 54 kDa subunit of the SRP. In Haloarcula marismortui (strain ATCC 43049 / DSM 3752 / JCM 8966 / VKM B-1809) (Halobacterium marismortui), this protein is Signal recognition particle 19 kDa protein.